A 1113-amino-acid chain; its full sequence is Myosin-binding protein 1 (1113 aa).

The helical transmembrane segment at 12 to 34 (LAFNEWLLMFMLFVNSIFSYVIA) threads the bilayer. Residues 209–229 (ESEAVFSDTEPKQESSLNHLP) form a disordered region. The GTD-binding domain occupies 888-986 (SEGDRLKRQV…DLEAEIEYFR (99 aa)).

In terms of assembly, interacts with myosin XI-K, XI-I and XI-1. As to expression, expressed in leaf epidermal cells, roots and root hairs.

The protein resides in the endomembrane system. Functionally, membrane-anchored myosin receptors that define a distinct, plant-specific transport vesicle compartment. The protein is Myosin-binding protein 1 of Arabidopsis thaliana (Mouse-ear cress).